The chain runs to 92 residues: MATTYEEFSAKLDRLDEEFNRKMQEQNAKFFADKPDESTLSPEMKEHYEKFERMIREHTEKFNKKMHEHSEHFKQKFAELLEQQKAAQYPSK.

The protein belongs to the KMP-11 family. Monomer.

It is found in the cytoplasm. The protein resides in the cytoskeleton. Its subcellular location is the cell projection. The protein localises to the cilium. It localises to the flagellum. May be involved in the regulation of the cytoskeleton through interaction with the subpellicular microtubules. May be involved in parasite mobility and attachment to the surface of the host cell. Behaves as a strong immunogen during infection. This is Kinetoplastid membrane protein 11C (KMP-11C) from Leishmania infantum.